We begin with the raw amino-acid sequence, 61 residues long: Short neurotoxin 1 (61 aa).

Cystine bridges form between Cys-3–Cys-23, Cys-17–Cys-40, Cys-42–Cys-53, and Cys-54–Cys-59.

This sequence belongs to the three-finger toxin family. Short-chain subfamily. Type I alpha-neurotoxin sub-subfamily. In terms of tissue distribution, expressed by the venom gland.

It localises to the secreted. In terms of biological role, binds to muscle nicotinic acetylcholine receptor (nAChR) and inhibit acetylcholine from binding to the receptor, thereby impairing neuromuscular transmission. The chain is Short neurotoxin 1 from Naja philippinensis (Philippine cobra).